The following is a 548-amino-acid chain: T-complex protein 1 subunit theta (548 aa).

Ala-2 is subject to N-acetylalanine. Position 23 is a phosphoserine (Ser-23). A Phosphotyrosine modification is found at Tyr-30. 2 residues coordinate ADP: Tyr-47 and Gly-48. Asp-99 contacts Mg(2+). Residues Gly-100, Thr-101, Asn-102, and Phe-103 each coordinate ADP. ATP is bound by residues Gly-100, Thr-101, and Asn-102. The residue at position 162 (Ser-162) is a Phosphoserine. Met-169, Ser-170, and Lys-171 together coordinate ADP. Residues Ser-170 and Lys-171 each coordinate ATP. Ser-213 carries the post-translational modification Phosphoserine. Residues Lys-224, Lys-254, and Lys-260 each participate in a glycyl lysine isopeptide (Lys-Gly) (interchain with G-Cter in SUMO2) cross-link. Phosphoserine occurs at positions 269 and 317. Lys-318 and Lys-400 each carry N6-acetyllysine. Gly-412 is a binding site for ADP. Gly-412 serves as a coordination point for ATP. A Glycyl lysine isopeptide (Lys-Gly) (interchain with G-Cter in SUMO1) cross-link involves residue Lys-459. The residue at position 466 (Lys-466) is an N6-acetyllysine. Residue Asp-499 participates in ADP binding. The ATP site is built by Asp-499 and Lys-504. Tyr-505 carries the phosphotyrosine modification. A disordered region spans residues 529–548 (PAGGPKPPSGKKDWDDDQND). Residue Lys-534 forms a Glycyl lysine isopeptide (Lys-Gly) (interchain with G-Cter in SUMO2) linkage. Phosphoserine is present on Ser-537. A Glycyl lysine isopeptide (Lys-Gly) (interchain with G-Cter in SUMO2) cross-link involves residue Lys-539.

The protein belongs to the TCP-1 chaperonin family. Component of the chaperonin-containing T-complex (TRiC), a hexadecamer composed of two identical back-to-back stacked rings enclosing a protein folding chamber. Each ring is made up of eight different subunits: TCP1/CCT1, CCT2, CCT3, CCT4, CCT5, CCT6A/CCT6, CCT7, CCT8. Interacts with PACRG. Interacts with DNAAF4. Interacts with synaptic plasticity regulator PANTS.

Its subcellular location is the cytoplasm. It is found in the cytoskeleton. It localises to the microtubule organizing center. The protein localises to the centrosome. The protein resides in the cilium basal body. It catalyses the reaction ATP + H2O = ADP + phosphate + H(+). In terms of biological role, component of the chaperonin-containing T-complex (TRiC), a molecular chaperone complex that assists the folding of actin, tubulin and other proteins upon ATP hydrolysis. The TRiC complex mediates the folding of WRAP53/TCAB1, thereby regulating telomere maintenance. As part of the TRiC complex may play a role in the assembly of BBSome, a complex involved in ciliogenesis regulating transports vesicles to the cilia. This chain is T-complex protein 1 subunit theta (CCT8), found in Homo sapiens (Human).